The following is a 227-amino-acid chain: MLTVPGLCWLCRMPLALGHWGICSVCSRATRTDKTLCPQCGLPATHSHLPCGRCLQKPPPWQRLVTVADYAPPLSPLIHQLKFSRRSEIASALSRLLLLEVLHARRTTGLQLPDRIVSVPLWQRRHWRRGFNQSDLLCQPLSRWLHCQWDSEAVTRTRATATQHFLSARLRKRNLKNAFRLELPVQGRHMVIVDDVVTTGSTVAEIAQLLLRNGAAAVQVWCLCRTL.

The protein belongs to the ComF/GntX family.

Required for the use of extracellular DNA as a nutrient. Has been suggested to be involved in gluconate metabolism. The chain is DNA utilization protein YhgH from Escherichia coli (strain K12).